The primary structure comprises 154 residues: Probable chemoreceptor glutamine deamidase CheD (154 aa).

This sequence belongs to the CheD family.

It catalyses the reaction L-glutaminyl-[protein] + H2O = L-glutamyl-[protein] + NH4(+). Probably deamidates glutamine residues to glutamate on methyl-accepting chemotaxis receptors (MCPs), playing an important role in chemotaxis. The chain is Probable chemoreceptor glutamine deamidase CheD from Methanococcus maripaludis (strain C5 / ATCC BAA-1333).